The primary structure comprises 942 residues: MAPPVLRPDNAIKRADELISVGESQAALQSLYEYLTARKIRFAQPSTVEPIVFKFLELGVDLKRGRLIKDALHQYKKLVQGSQDGLSSVGAVARKFIDCVETKMAFEHLKAEESQTEEDDDLEGGVTPENLLKSVYIQDQSVAGFNDEVVTSWLKFTWESYRAVLDLVRNNSQLEITYAGVVNRTMQFCLKYNRKNEFKRLAEMLRQHLDAANYQQSKIGSNIVDLSDSETLQRYLDQRFLQLNVSVKLELWHEAFRSIEDVYHLMKMSKHTPKSSTLANYYENLAKVFLISNAQLLHTATWEKFYRLYQSNPNATEEDFKKYSSIILLSALSTPLDILPTVGYDPQMRLYRLLGLESRPTRNEMIELAKQEDIYKHIDEDIIKLYEIMEINYNADTIKTEIAALLPKLEAKPYFKQYINQLRNVLLRKNYVSLSETENAIPTDALYDKASLPGVLSLPHWDMEKTLLQAAVEDYVSISIDHDSNTVTFFKDPFEIISKAAGTVEEEEEEEEEEGEEVEGEEAETGEEIVEEGEEHENEENKEPEPVITRTTFIRNRLAELSNVLEEIDAFKNASYLEKVKLARETLITQTKDSIENLKQIAEDRAKRAQEQKKKYMASAAVRAEEDAEIRQRQILEEKAALEAKLEQDAHRRLVEKKKREFEDLKQREIQKFIDEFNKKDHAAKIASEEVQGLDIKEIKTLIFSKLSQDKSELEDRMTSSLQKLDHAERAYRKSELPLLRKEAESLKETDMNKFNDMKSKIVDTARAEFDAKMEDHNRLVGVYNDYVSLKDRLTTTVEEKFKLIRAENAAKFEAAKKARIEEVRKQRYEELVAERKAEIEAEEREERAKKQEETARKQKEMEEAAERKSKASSAAAAKSILTGGNDARSAKLDEIARRQREIEQAAERKAQGPSASTEAPDDEGRNLTYAEKMKLRRASKK.

Residues 320-494 form the PCI domain; that stretch reads FKKYSSIILL…NTVTFFKDPF (175 aa). Coiled-coil stretches lie at residues 499–529, 588–669, 705–734, and 821–912; these read KAAG…GEEI, ITQT…KQRE, SKLS…AYRK, and IEEV…RKAQ. The disordered stretch occupies residues 502–546; that stretch reads GTVEEEEEEEEEEGEEVEGEEAETGEEIVEEGEEHENEENKEPEP. A compositionally biased stretch (acidic residues) spans 504-538; that stretch reads VEEEEEEEEEEGEEVEGEEAETGEEIVEEGEEHEN. Basic and acidic residues-rich tracts occupy residues 836–870 and 889–911; these read RKAE…ERKS and RSAK…ERKA. The disordered stretch occupies residues 836-942; that stretch reads RKAEIEAEER…KMKLRRASKK (107 aa).

This sequence belongs to the eIF-3 subunit A family. In terms of assembly, component of the eukaryotic translation initiation factor 3 (eIF-3) complex.

It is found in the cytoplasm. In terms of biological role, RNA-binding component of the eukaryotic translation initiation factor 3 (eIF-3) complex, which is involved in protein synthesis of a specialized repertoire of mRNAs and, together with other initiation factors, stimulates binding of mRNA and methionyl-tRNAi to the 40S ribosome. The eIF-3 complex specifically targets and initiates translation of a subset of mRNAs involved in cell proliferation. This chain is Eukaryotic translation initiation factor 3 subunit A, found in Vanderwaltozyma polyspora (strain ATCC 22028 / DSM 70294 / BCRC 21397 / CBS 2163 / NBRC 10782 / NRRL Y-8283 / UCD 57-17) (Kluyveromyces polysporus).